Here is a 160-residue protein sequence, read N- to C-terminus: Ribosomal RNA large subunit methyltransferase H (160 aa).

2 residues coordinate S-adenosyl-L-methionine: Leu76 and Gly108.

This sequence belongs to the RNA methyltransferase RlmH family. As to quaternary structure, homodimer.

The protein resides in the cytoplasm. It catalyses the reaction pseudouridine(1915) in 23S rRNA + S-adenosyl-L-methionine = N(3)-methylpseudouridine(1915) in 23S rRNA + S-adenosyl-L-homocysteine + H(+). In terms of biological role, specifically methylates the pseudouridine at position 1915 (m3Psi1915) in 23S rRNA. This chain is Ribosomal RNA large subunit methyltransferase H, found in Afipia carboxidovorans (strain ATCC 49405 / DSM 1227 / KCTC 32145 / OM5) (Oligotropha carboxidovorans).